A 206-amino-acid polypeptide reads, in one-letter code: Large ribosomal subunit protein uL4 (206 aa).

It belongs to the universal ribosomal protein uL4 family. In terms of assembly, part of the 50S ribosomal subunit.

Its function is as follows. One of the primary rRNA binding proteins, this protein initially binds near the 5'-end of the 23S rRNA. It is important during the early stages of 50S assembly. It makes multiple contacts with different domains of the 23S rRNA in the assembled 50S subunit and ribosome. In terms of biological role, forms part of the polypeptide exit tunnel. This is Large ribosomal subunit protein uL4 from Rhodopseudomonas palustris (strain BisB5).